Consider the following 150-residue polypeptide: Ribosome maturation factor RimP (150 aa).

It belongs to the RimP family.

It is found in the cytoplasm. In terms of biological role, required for maturation of 30S ribosomal subunits. The protein is Ribosome maturation factor RimP of Thermotoga maritima (strain ATCC 43589 / DSM 3109 / JCM 10099 / NBRC 100826 / MSB8).